Here is a 1201-residue protein sequence, read N- to C-terminus: Autophagy-related protein 11 (1201 aa).

The disordered stretch occupies residues 90-109 (FPFLGRPSTPTKGSDNSTGT). The segment covering 97–109 (STPTKGSDNSTGT) has biased composition (polar residues). A coiled-coil region spans residues 418–452 (LLRSDDMVRSLRDEKSKLEEKVKGSESRIRKLEDL). Disordered regions lie at residues 458 to 503 (HMGR…SEEK) and 525 to 545 (KLQK…QEVQ). The segment covering 485 to 499 (RRSSVSSRRMSSNQS) has biased composition (low complexity). Over residues 525–542 (KLQKDAHAERQSNTDKIQ) the composition is skewed to basic and acidic residues. Coiled-coil stretches lie at residues 566–670 (RRFL…ALQA) and 710–828 (SAKA…WKER). Disordered stretches follow at residues 1052–1076 (SMNG…DDEN) and 1115–1201 (DARG…LQGP). Polar residues predominate over residues 1133 to 1166 (RTLSKSLDSRRNSSNSKKGPATPSQRGNDSTTDL). Residues 1191–1201 (EEVRRDQLQGP) show a composition bias toward basic and acidic residues.

It belongs to the ATG11 family. As to quaternary structure, homodimer and potential homooligomers.

Its subcellular location is the preautophagosomal structure membrane. In terms of biological role, selective autophagy-specific protein required for pexophagy and mitophagy. In contrast to its Saccharomyces cerevisiae ATG11 ortholog, is not involved in non-selective autophagy nor in cytoplasm to vacuole transport (Cvt). The protein is Autophagy-related protein 11 of Aspergillus oryzae (strain ATCC 42149 / RIB 40) (Yellow koji mold).